The primary structure comprises 438 residues: MHTEDNGLKKEIGLLFALTLVIGTIIGSGVFMKPGAVLAYSGDSKMALFAWLLGGILTLAGGLTIAEIGTQIPKTGGLYTYLEEVYGEFWGFLCGWVQIIIYGPAIIGALGLYFGSLMANLFGWGSGLSKVIGIIAVLFLCVINIIGTKYGGFVQTLTTIGKLIPIACIIVFGLWKGDQHIFTAVNESISDMNFGAAILATLFAYDGWILLAALGGEMKNPEKLLPRAMTGGLLIVTAIYIFINFALLHILSANEIVTLGENATSTAATMLFGSIGGKLISVGIIVSIFGCLNGKVLSFPRVSFAMAERKQLPFAEKLSHVHPSFRTPWIAISFQIALALIMMLISNPDKLSEISIFMIYIFYVMAFFAVFILRKRAKGEKRAYSVPLYPFMPILAIAGSFFVLGSTLITDTMSCGLSILIGLAGLPVYYGMKKRKAS.

Topologically, residues 1-11 (MHTEDNGLKKE) are cytoplasmic. Residues 12 to 32 (IGLLFALTLVIGTIIGSGVFM) form a helical membrane-spanning segment. At 33-45 (KPGAVLAYSGDSK) the chain is on the extracellular side. A helical membrane pass occupies residues 46-66 (MALFAWLLGGILTLAGGLTIA). Residues 67–98 (EIGTQIPKTGGLYTYLEEVYGEFWGFLCGWVQ) lie on the Cytoplasmic side of the membrane. A helical membrane pass occupies residues 99–119 (IIIYGPAIIGALGLYFGSLMA). Residues 120 to 126 (NLFGWGS) are Extracellular-facing. Residues 127–147 (GLSKVIGIIAVLFLCVINIIG) form a helical membrane-spanning segment. The Cytoplasmic segment spans residues 148–151 (TKYG). A helical membrane pass occupies residues 152 to 172 (GFVQTLTTIGKLIPIACIIVF). Residues 173 to 193 (GLWKGDQHIFTAVNESISDMN) lie on the Extracellular side of the membrane. A helical transmembrane segment spans residues 194–214 (FGAAILATLFAYDGWILLAAL). Topologically, residues 215–230 (GGEMKNPEKLLPRAMT) are cytoplasmic. Residues 231–251 (GGLLIVTAIYIFINFALLHIL) traverse the membrane as a helical segment. At 252–269 (SANEIVTLGENATSTAAT) the chain is on the extracellular side. Residues 270-290 (MLFGSIGGKLISVGIIVSIFG) form a helical membrane-spanning segment. Residues 291-327 (CLNGKVLSFPRVSFAMAERKQLPFAEKLSHVHPSFRT) lie on the Cytoplasmic side of the membrane. The chain crosses the membrane as a helical span at residues 328 to 348 (PWIAISFQIALALIMMLISNP). Residues 349 to 352 (DKLS) lie on the Extracellular side of the membrane. Residues 353 to 373 (EISIFMIYIFYVMAFFAVFIL) form a helical membrane-spanning segment. At 374–388 (RKRAKGEKRAYSVPL) the chain is on the cytoplasmic side. A helical membrane pass occupies residues 389–409 (YPFMPILAIAGSFFVLGSTLI). Residues 410–411 (TD) are Extracellular-facing. The chain crosses the membrane as a helical span at residues 412–432 (TMSCGLSILIGLAGLPVYYGM). At 433 to 438 (KKRKAS) the chain is on the cytoplasmic side.

The protein belongs to the amino acid-polyamine-organocation (APC) superfamily. L-type amino acid transporter (LAT) (TC 2.A.3.8) family. As to quaternary structure, monomer.

It is found in the cell membrane. Its function is as follows. Exhibits an obligate exchange activity for serine, threonine and aromatic amino acids. The chain is Serine/threonine exchanger SteT (steT) from Bacillus subtilis (strain 168).